A 69-amino-acid polypeptide reads, in one-letter code: Small, acid-soluble spore protein I (69 aa).

The protein belongs to the SspI family.

Its subcellular location is the spore core. The chain is Small, acid-soluble spore protein I from Geobacillus kaustophilus (strain HTA426).